The sequence spans 247 residues: Ribonuclease 3 (247 aa).

The RNase III domain occupies 21 to 149 (VDHQPLLDHL…LFGAIFRQHG (129 aa)). Glu-62 serves as a coordination point for Mg(2+). Asp-66 is a catalytic residue. 2 residues coordinate Mg(2+): Asp-135 and Glu-138. Glu-138 is a catalytic residue. Residues 176–244 (DWKTTLQEEL…AHQAFRKLRE (69 aa)) enclose the DRBM domain.

It belongs to the ribonuclease III family. In terms of assembly, homodimer. Mg(2+) serves as cofactor.

Its subcellular location is the cytoplasm. The catalysed reaction is Endonucleolytic cleavage to 5'-phosphomonoester.. In terms of biological role, digests double-stranded RNA. Involved in the processing of primary rRNA transcript to yield the immediate precursors to the large and small rRNAs (23S and 16S). Processes some mRNAs, and tRNAs when they are encoded in the rRNA operon. Processes pre-crRNA and tracrRNA of type II CRISPR loci if present in the organism. This chain is Ribonuclease 3, found in Corynebacterium glutamicum (strain ATCC 13032 / DSM 20300 / JCM 1318 / BCRC 11384 / CCUG 27702 / LMG 3730 / NBRC 12168 / NCIMB 10025 / NRRL B-2784 / 534).